Consider the following 644-residue polypeptide: DNA mismatch repair protein MutL (644 aa).

This sequence belongs to the DNA mismatch repair MutL/HexB family.

In terms of biological role, this protein is involved in the repair of mismatches in DNA. It is required for dam-dependent methyl-directed DNA mismatch repair. May act as a 'molecular matchmaker', a protein that promotes the formation of a stable complex between two or more DNA-binding proteins in an ATP-dependent manner without itself being part of a final effector complex. The chain is DNA mismatch repair protein MutL from Chlorobium chlorochromatii (strain CaD3).